A 214-amino-acid chain; its full sequence is Phosphatidylserine decarboxylase proenzyme (214 aa).

Ser182 functions as the Schiff-base intermediate with substrate; via pyruvic acid in the catalytic mechanism. Ser182 is modified (pyruvic acid (Ser); by autocatalysis).

This sequence belongs to the phosphatidylserine decarboxylase family. PSD-A subfamily. As to quaternary structure, heterodimer of a large membrane-associated beta subunit and a small pyruvoyl-containing alpha subunit. Requires pyruvate as cofactor. Post-translationally, is synthesized initially as an inactive proenzyme. Formation of the active enzyme involves a self-maturation process in which the active site pyruvoyl group is generated from an internal serine residue via an autocatalytic post-translational modification. Two non-identical subunits are generated from the proenzyme in this reaction, and the pyruvate is formed at the N-terminus of the alpha chain, which is derived from the carboxyl end of the proenzyme. The post-translation cleavage follows an unusual pathway, termed non-hydrolytic serinolysis, in which the side chain hydroxyl group of the serine supplies its oxygen atom to form the C-terminus of the beta chain, while the remainder of the serine residue undergoes an oxidative deamination to produce ammonia and the pyruvoyl prosthetic group on the alpha chain.

The protein resides in the cell membrane. The catalysed reaction is a 1,2-diacyl-sn-glycero-3-phospho-L-serine + H(+) = a 1,2-diacyl-sn-glycero-3-phosphoethanolamine + CO2. The protein operates within phospholipid metabolism; phosphatidylethanolamine biosynthesis; phosphatidylethanolamine from CDP-diacylglycerol: step 2/2. In terms of biological role, catalyzes the formation of phosphatidylethanolamine (PtdEtn) from phosphatidylserine (PtdSer). This chain is Phosphatidylserine decarboxylase proenzyme, found in Burkholderia vietnamiensis (strain G4 / LMG 22486) (Burkholderia cepacia (strain R1808)).